Consider the following 293-residue polypeptide: Protein translocase subunit SecF (293 aa).

A run of 6 helical transmembrane segments spans residues 10 to 30 (ARIFFSITAVVLIVGIVSMFA), 130 to 150 (VKSAVGAVVLSWVLMIIYITI), 158 to 178 (LAAIVALIIDVMVTLTWFSVL), 185 to 205 (SFVAALLTVVGYSVNGTIVVF), 244 to 264 (LFAVVAIFLFGGETIHNFSFA), and 267 to 287 (VGFCSGFYTSTFLAGSMWLFF).

The protein belongs to the SecD/SecF family. SecF subfamily. In terms of assembly, forms a complex with SecD. Part of the essential Sec protein translocation apparatus which comprises SecA, SecYEG and auxiliary proteins SecDF. Other proteins may also be involved.

Its subcellular location is the cell membrane. Functionally, part of the Sec protein translocase complex. Interacts with the SecYEG preprotein conducting channel. SecDF uses the proton motive force (PMF) to complete protein translocation after the ATP-dependent function of SecA. The polypeptide is Protein translocase subunit SecF (Acidaminococcus fermentans (strain ATCC 25085 / DSM 20731 / CCUG 9996 / CIP 106432 / VR4)).